The chain runs to 319 residues: Cobalamin biosynthesis protein CobD (319 aa).

3 consecutive transmembrane segments (helical) span residues 54-76, 154-173, and 301-318; these read VLLLLTVLLIVTALSLALVWLSY, GVTAPLFYALIGGAPLALLY, and VLGFLVFLFLLGGFIYAI.

The protein belongs to the CobD/CbiB family.

The protein resides in the cell membrane. It participates in cofactor biosynthesis; adenosylcobalamin biosynthesis. Converts cobyric acid to cobinamide by the addition of aminopropanol on the F carboxylic group. This Halalkalibacterium halodurans (strain ATCC BAA-125 / DSM 18197 / FERM 7344 / JCM 9153 / C-125) (Bacillus halodurans) protein is Cobalamin biosynthesis protein CobD.